The chain runs to 828 residues: Periplasmic nitrate reductase (828 aa).

Residues Met-1–Ala-31 constitute a signal peptide (tat-type signal). One can recognise a 4Fe-4S Mo/W bis-MGD-type domain in the interval Ile-39 to Asp-95. Positions 46, 49, 53, and 81 each coordinate [4Fe-4S] cluster. Mo-bis(molybdopterin guanine dinucleotide)-binding positions include Lys-83, Gln-150, Asn-175, Cys-179, Trp-212–Met-219, Ser-243–His-247, Gln-262–Asp-264, Met-372, Gln-376, Asn-482, Ser-508–Asp-509, Lys-531, Asp-558, and Thr-718–Thr-727. Position 794 (Phe-794) interacts with substrate. Asn-802 and Lys-819 together coordinate Mo-bis(molybdopterin guanine dinucleotide).

It belongs to the prokaryotic molybdopterin-containing oxidoreductase family. NasA/NapA/NarB subfamily. As to quaternary structure, component of the periplasmic nitrate reductase NapAB complex composed of NapA and NapB. [4Fe-4S] cluster serves as cofactor. It depends on Mo-bis(molybdopterin guanine dinucleotide) as a cofactor. In terms of processing, predicted to be exported by the Tat system. The position of the signal peptide cleavage has not been experimentally proven.

It localises to the periplasm. It carries out the reaction 2 Fe(II)-[cytochrome] + nitrate + 2 H(+) = 2 Fe(III)-[cytochrome] + nitrite + H2O. In terms of biological role, catalytic subunit of the periplasmic nitrate reductase complex NapAB. Receives electrons from NapB and catalyzes the reduction of nitrate to nitrite. The polypeptide is Periplasmic nitrate reductase (Escherichia coli (strain K12 / MC4100 / BW2952)).